The following is a 514-amino-acid chain: Cilia- and flagella-associated protein 53 (514 aa).

Coiled coils occupy residues 91–148 (IINI…RQDF) and 203–474 (KLWE…REFE).

Belongs to the CFAP53 family. Microtubule inner protein component of sperm flagellar doublet microtubules. Interacts with PIERCE1 and PIERCE2; the interactions link outer dynein arms docking complex (ODA-DC) to the internal microtubule inner proteins (MIP) in cilium axoneme. Interacts with CCDC38. Interacts with CCDC42 and IFT88. Interacts with centriolar satellite proteins PIBF1/CEP90 and PCM1. Interacts with dyneins DNAIC1, DNAIC2 AND DNAH11 and with ODA-DC component ODAD4/TTC25. As to expression, expressed in skin fibroblasts (at protein level). Expressed in nasal respiratory epithelial cells (at protein level). Expressed in airway epithelial cells.

Its subcellular location is the cytoplasm. The protein resides in the cytoskeleton. It is found in the cilium axoneme. It localises to the flagellum axoneme. The protein localises to the microtubule organizing center. Its subcellular location is the centrosome. The protein resides in the centriole. It is found in the centriolar satellite. It localises to the spindle pole. The protein localises to the cell projection. Its subcellular location is the cilium. Its function is as follows. Microtubule inner protein (MIP) part of the dynein-decorated doublet microtubules (DMTs) in cilia axoneme, which is required for motile cilia beating. Regulates motility patterns of both 9+0 and 9+2 motile cilia through differential localization and recruitment of axonemal dynein components. Required for centriolar satellite integrity and non-motile cilium assembly. Required for motile cilium formation. Through its role in the beating of primary cilia, involved in the establishment of organ laterality during embryogenesis. Required for sperm flagellum biogenesis and is essential for male fertility. This chain is Cilia- and flagella-associated protein 53, found in Homo sapiens (Human).